Consider the following 265-residue polypeptide: Shikimate dehydrogenase (NADP(+)) (265 aa).

Residues 15–17 (SLS) and Thr62 each bind shikimate. Lys66 serves as the catalytic Proton acceptor. Shikimate-binding residues include Asn87 and Asp102. Residues 125 to 129 (GAGGA), 149 to 154 (NRTLEK), and Leu209 contribute to the NADP(+) site. Tyr211 provides a ligand contact to shikimate. Gly233 contacts NADP(+).

It belongs to the shikimate dehydrogenase family. In terms of assembly, homodimer.

It carries out the reaction shikimate + NADP(+) = 3-dehydroshikimate + NADPH + H(+). The protein operates within metabolic intermediate biosynthesis; chorismate biosynthesis; chorismate from D-erythrose 4-phosphate and phosphoenolpyruvate: step 4/7. Its function is as follows. Involved in the biosynthesis of the chorismate, which leads to the biosynthesis of aromatic amino acids. Catalyzes the reversible NADPH linked reduction of 3-dehydroshikimate (DHSA) to yield shikimate (SA). The protein is Shikimate dehydrogenase (NADP(+)) of Legionella pneumophila subsp. pneumophila (strain Philadelphia 1 / ATCC 33152 / DSM 7513).